A 170-amino-acid polypeptide reads, in one-letter code: Adenine phosphoribosyltransferase (170 aa).

The protein belongs to the purine/pyrimidine phosphoribosyltransferase family. In terms of assembly, homodimer.

The protein localises to the cytoplasm. It catalyses the reaction AMP + diphosphate = 5-phospho-alpha-D-ribose 1-diphosphate + adenine. It participates in purine metabolism; AMP biosynthesis via salvage pathway; AMP from adenine: step 1/1. Its function is as follows. Catalyzes a salvage reaction resulting in the formation of AMP, that is energically less costly than de novo synthesis. This is Adenine phosphoribosyltransferase from Cyanothece sp. (strain PCC 7425 / ATCC 29141).